The sequence spans 170 residues: Adenine phosphoribosyltransferase (170 aa).

This sequence belongs to the purine/pyrimidine phosphoribosyltransferase family. In terms of assembly, homodimer.

The protein resides in the cytoplasm. The catalysed reaction is AMP + diphosphate = 5-phospho-alpha-D-ribose 1-diphosphate + adenine. The protein operates within purine metabolism; AMP biosynthesis via salvage pathway; AMP from adenine: step 1/1. Functionally, catalyzes a salvage reaction resulting in the formation of AMP, that is energically less costly than de novo synthesis. The polypeptide is Adenine phosphoribosyltransferase (Bacillus subtilis (strain 168)).